The chain runs to 352 residues: [LysW]-L-2-aminoadipate/[LysW]-L-glutamate phosphate reductase (352 aa).

13–16 (SGYT) provides a ligand contact to NADP(+). Residue cysteine 153 is part of the active site. Asparagine 319 contributes to the NADP(+) binding site.

This sequence belongs to the NAGSA dehydrogenase family. Type 1 subfamily. LysY sub-subfamily.

It is found in the cytoplasm. The catalysed reaction is [amino-group carrier protein]-C-terminal-N-(1-carboxy-5-oxopentan-1-yl)-L-glutamine + phosphate + NADP(+) = [amino-group carrier protein]-C-terminal-N-(1-carboxy-5-phosphooxy-5-oxopentan-1-yl)-L-glutamine + NADPH + H(+). The enzyme catalyses [amino-group carrier protein]-C-terminal-gamma-(L-glutamyl-5-semialdehyde)-L-glutamate + phosphate + NADP(+) = [amino-group carrier protein]-C-terminal-gamma-(5-phospho-L-glutamyl)-L-glutamate + NADPH + H(+). It participates in amino-acid biosynthesis; L-lysine biosynthesis via AAA pathway; L-lysine from L-alpha-aminoadipate (Thermus route): step 3/5. The protein operates within amino-acid biosynthesis; L-arginine biosynthesis. In terms of biological role, involved in both the arginine and lysine biosynthetic pathways. The sequence is that of [LysW]-L-2-aminoadipate/[LysW]-L-glutamate phosphate reductase from Saccharolobus solfataricus (strain ATCC 35092 / DSM 1617 / JCM 11322 / P2) (Sulfolobus solfataricus).